The following is a 313-amino-acid chain: 4-diphosphocytidyl-2-C-methyl-D-erythritol kinase (313 aa).

The active site involves K10. Position 95–105 (95–105 (PVTAGLGGGSS)) interacts with ATP. D136 is an active-site residue. The interval 289–313 (HPRVSPWRSPRSASSRSTRRSSRPT) is disordered. The segment covering 292 to 304 (VSPWRSPRSASSR) has biased composition (low complexity).

Belongs to the GHMP kinase family. IspE subfamily.

It carries out the reaction 4-CDP-2-C-methyl-D-erythritol + ATP = 4-CDP-2-C-methyl-D-erythritol 2-phosphate + ADP + H(+). It participates in isoprenoid biosynthesis; isopentenyl diphosphate biosynthesis via DXP pathway; isopentenyl diphosphate from 1-deoxy-D-xylulose 5-phosphate: step 3/6. Functionally, catalyzes the phosphorylation of the position 2 hydroxy group of 4-diphosphocytidyl-2C-methyl-D-erythritol. The protein is 4-diphosphocytidyl-2-C-methyl-D-erythritol kinase of Anaeromyxobacter dehalogenans (strain 2CP-1 / ATCC BAA-258).